The primary structure comprises 289 residues: tRNA dimethylallyltransferase (289 aa).

An ATP-binding site is contributed by 9 to 16; the sequence is GTTASGKT. 11–16 serves as a coordination point for substrate; the sequence is TASGKT. The interaction with substrate tRNA stretch occupies residues 34–37; sequence DSLC.

This sequence belongs to the IPP transferase family. In terms of assembly, monomer. Mg(2+) serves as cofactor.

It carries out the reaction adenosine(37) in tRNA + dimethylallyl diphosphate = N(6)-dimethylallyladenosine(37) in tRNA + diphosphate. Its function is as follows. Catalyzes the transfer of a dimethylallyl group onto the adenine at position 37 in tRNAs that read codons beginning with uridine, leading to the formation of N6-(dimethylallyl)adenosine (i(6)A). This Campylobacter jejuni subsp. doylei (strain ATCC BAA-1458 / RM4099 / 269.97) protein is tRNA dimethylallyltransferase.